The sequence spans 92 residues: MKFEAVVRTEQGKGASRRLRHAGQFPAIVYGGTEAPVSIALDHDAVINQMDKPAFYEAIELVIDGAVVKVKPQDVQRHAFKPKVEHMDFIRI.

Belongs to the bacterial ribosomal protein bL25 family. As to quaternary structure, part of the 50S ribosomal subunit; part of the 5S rRNA/L5/L18/L25 subcomplex. Contacts the 5S rRNA. Binds to the 5S rRNA independently of L5 and L18.

Functionally, this is one of the proteins that binds to the 5S RNA in the ribosome where it forms part of the central protuberance. This is Large ribosomal subunit protein bL25 from Aliivibrio fischeri (strain MJ11) (Vibrio fischeri).